Reading from the N-terminus, the 364-residue chain is tRNA 2-selenouridine synthase (364 aa).

Residues 14–137 (LLADTPLIDV…LRQTAIQATW (124 aa)) enclose the Rhodanese domain. Catalysis depends on C97, which acts as the S-selanylcysteine intermediate.

Belongs to the SelU family. As to quaternary structure, monomer.

The catalysed reaction is 5-methylaminomethyl-2-thiouridine(34) in tRNA + selenophosphate + (2E)-geranyl diphosphate + H2O + H(+) = 5-methylaminomethyl-2-selenouridine(34) in tRNA + (2E)-thiogeraniol + phosphate + diphosphate. It carries out the reaction 5-methylaminomethyl-2-thiouridine(34) in tRNA + (2E)-geranyl diphosphate = 5-methylaminomethyl-S-(2E)-geranyl-thiouridine(34) in tRNA + diphosphate. The enzyme catalyses 5-methylaminomethyl-S-(2E)-geranyl-thiouridine(34) in tRNA + selenophosphate + H(+) = 5-methylaminomethyl-2-(Se-phospho)selenouridine(34) in tRNA + (2E)-thiogeraniol. It catalyses the reaction 5-methylaminomethyl-2-(Se-phospho)selenouridine(34) in tRNA + H2O = 5-methylaminomethyl-2-selenouridine(34) in tRNA + phosphate. Functionally, involved in the post-transcriptional modification of the uridine at the wobble position (U34) of tRNA(Lys), tRNA(Glu) and tRNA(Gln). Catalyzes the conversion of 2-thiouridine (S2U-RNA) to 2-selenouridine (Se2U-RNA). Acts in a two-step process involving geranylation of 2-thiouridine (S2U) to S-geranyl-2-thiouridine (geS2U) and subsequent selenation of the latter derivative to 2-selenouridine (Se2U) in the tRNA chain. This Salmonella heidelberg (strain SL476) protein is tRNA 2-selenouridine synthase.